Consider the following 343-residue polypeptide: MTTDTTGRTGNPAAAASPDRFRYGFLKGNPQLTKNGELKHLLSIEGLPRSIVNHILDTAEQFVSVTDREVKKVPLLRGKSVFNLFFENSTRTRTTFEIAATRLSADVLNLNINASSTSKGESLLDTINNLSAMHADLFVVRHASSGAPYLIAEHCAPHVHVINAGDGRHAHPTQGLLDMYTIRHYKRDFTKLRVAIVGDILHSRVARSDIHALTTLGVPEVRAIGPRTLLPGGLEQMGVKVFHNLDEGLKGVDVIIMLRLQNERMSGALLPSAQEYFKTWGLTPERLALAAPDAIVMHPGPMNRGVEIDSQVADGPQSVILNQVTFGIAVRMAVMGIVAGNSD.

2 residues coordinate carbamoyl phosphate: arginine 91 and threonine 92. Lysine 119 contributes to the L-aspartate binding site. Arginine 141, histidine 171, and glutamine 174 together coordinate carbamoyl phosphate. Residues arginine 204 and arginine 259 each contribute to the L-aspartate site. Carbamoyl phosphate contacts are provided by glycine 300 and proline 301.

Belongs to the aspartate/ornithine carbamoyltransferase superfamily. ATCase family. Heterododecamer (2C3:3R2) of six catalytic PyrB chains organized as two trimers (C3), and six regulatory PyrI chains organized as three dimers (R2).

The enzyme catalyses carbamoyl phosphate + L-aspartate = N-carbamoyl-L-aspartate + phosphate + H(+). Its pathway is pyrimidine metabolism; UMP biosynthesis via de novo pathway; (S)-dihydroorotate from bicarbonate: step 2/3. In terms of biological role, catalyzes the condensation of carbamoyl phosphate and aspartate to form carbamoyl aspartate and inorganic phosphate, the committed step in the de novo pyrimidine nucleotide biosynthesis pathway. The protein is Aspartate carbamoyltransferase catalytic subunit of Burkholderia cenocepacia (strain HI2424).